The chain runs to 508 residues: RanBP-type and C3HC4-type zinc finger-containing protein 1 (508 aa).

Met-1 carries the post-translational modification N-acetylmethionine. The interaction with IRF3 stretch occupies residues 1–218 (MDEKTKKAEE…PGCEMCCRAR (218 aa)). Residues 1–268 (MDEKTKKAEE…NYLQHVQLEQ (268 aa)) are interaction with TAB2. Ser-50 is subject to Phosphoserine. The 65-residue stretch at 55 to 119 (IRLCVSVEDA…DQETLHSHGI (65 aa)) folds into the Ubiquitin-like domain. Residues 69 to 131 (VTIWLTVRPD…NGDGAYLYLL (63 aa)) form an interaction with RNF31 region. The tract at residues 163 to 191 (QSRGPLEPVLPKPRTNQEPGQPDAAPESP) is disordered. The segment at 188-220 (PESPPVGWQCPGCTFINKPTRPGCEMCCRARPE) adopts a RanBP2-type zinc-finger fold. Residues 231 to 259 (DEEERARLAGEEEALRQYQQRKQQQQEGN) are a coiled coil. The TRIAD supradomain stretch occupies residues 276–504 (EPTECPVCYS…VNGIPCHPSC (229 aa)). Zn(2+) contacts are provided by Cys-280, Cys-283, Cys-298, His-300, Cys-303, Cys-306, and Cys-321. The RING-type 1 zinc-finger motif lies at 280–330 (CPVCYSVLAPGEAVVLRECLHTFCRECLQGTIRNSQEAEVACPFIDSTYSC). The residue at position 328 (Tyr-328) is a Phosphotyrosine. Positions 330, 369, 374, 389, 392, 397, 400, 404, 409, 445, and 448 each coordinate Zn(2+). The IBR-type zinc-finger motif lies at 349–409 (QRFLDLGVSI…CKAIHEHMNC (61 aa)). An RING-type 2; atypical zinc finger spans residues 445 to 474 (CPQCRIVVQKKDGCDWIRCTVCHTEICWVT). Residue Cys-458 is part of the active site. Residues Cys-463 and Cys-466 each coordinate Zn(2+).

This sequence belongs to the RBR family. Component of the LUBAC complex (linear ubiquitin chain assembly complex) which consists of SHARPIN, RBCK1 and RNF31. LUBAC has a MW of approximately 600 kDa suggesting a heteromultimeric assembly of its subunits. Interacts with beta-I-type (PRKCB1) and zeta-type protein kinase C (PRKCZ). Interacts with UBE2L3. Interacts with IREB2 only in iron-rich conditions. Associates with the TNF-R1 signaling complex (TNF-RSC) in a stimulation-dependent manner. Interacts with EYA1, TAB2, TAB3, MAP3K7 TRAF6 and RIPK1. Interacts with IRF3. Post-translationally, auto-ubiquitinated. Auto-ubiquitination leads to degradation by the proteasome. In terms of processing, phosphorylated. In vitro, phosphorylation inhibits auto-ubiquitination activity.

The enzyme catalyses [E2 ubiquitin-conjugating enzyme]-S-ubiquitinyl-L-cysteine + [acceptor protein]-L-lysine = [E2 ubiquitin-conjugating enzyme]-L-cysteine + [acceptor protein]-N(6)-ubiquitinyl-L-lysine.. It functions in the pathway protein modification; protein ubiquitination. Functionally, E3 ubiquitin-protein ligase, which accepts ubiquitin from specific E2 ubiquitin-conjugating enzymes, such as UBE2L3/UBCM4, and then transfers it to substrates. Functions as an E3 ligase for oxidized IREB2 and both heme and oxygen are necessary for IREB2 ubiquitination. Promotes ubiquitination of TAB2 and IRF3 and their degradation by the proteasome. Component of the LUBAC complex which conjugates linear ('Met-1'-linked) polyubiquitin chains to substrates and plays a key role in NF-kappa-B activation and regulation of inflammation. LUBAC conjugates linear polyubiquitin to IKBKG and RIPK1 and is involved in activation of the canonical NF-kappa-B and the JNK signaling pathways. Linear ubiquitination mediated by the LUBAC complex interferes with TNF-induced cell death and thereby prevents inflammation. LUBAC is recruited to the TNF-R1 signaling complex (TNF-RSC) following polyubiquitination of TNF-RSC components by BIRC2 and/or BIRC3 and to conjugate linear polyubiquitin to IKBKG and possibly other components contributing to the stability of the complex. The LUBAC complex is also involved in innate immunity by conjugating linear polyubiquitin chains at the surface of bacteria invading the cytosol to form the ubiquitin coat surrounding bacteria. LUBAC is not able to initiate formation of the bacterial ubiquitin coat, and can only promote formation of linear polyubiquitins on pre-existing ubiquitin. The bacterial ubiquitin coat acts as an 'eat-me' signal for xenophagy and promotes NF-kappa-B activation. Together with OTULIN, the LUBAC complex regulates the canonical Wnt signaling during angiogenesis. Binds polyubiquitin of different linkage types. The chain is RanBP-type and C3HC4-type zinc finger-containing protein 1 (Rbck1) from Mus musculus (Mouse).